An 88-amino-acid polypeptide reads, in one-letter code: MKEKDNFEMVINFKRAFMGRRNQRTKRAIKMIRNIVQRHFGAEKVIIDPLLAKSITYNGRDKIVRKVRVAVKKIGEKTYLVRLALKSE.

The protein belongs to the eukaryotic ribosomal protein eL31 family.

The polypeptide is Large ribosomal subunit protein eL31 (rpl31e) (Sulfurisphaera tokodaii (strain DSM 16993 / JCM 10545 / NBRC 100140 / 7) (Sulfolobus tokodaii)).